Reading from the N-terminus, the 265-residue chain is Phosphatidylglycerol--prolipoprotein diacylglyceryl transferase (265 aa).

7 consecutive transmembrane segments (helical) span residues 11 to 31 (AVSI…FGFI), 56 to 76 (MVTW…ILFY), 91 to 111 (IWHG…AVWL), 120 to 140 (FLSV…FGRI), 173 to 193 (QLYE…WFSG), 198 to 218 (VGAV…AVEF), and 233 to 253 (WLTM…WLLL). Arg-139 serves as a coordination point for a 1,2-diacyl-sn-glycero-3-phospho-(1'-sn-glycerol).

Belongs to the Lgt family.

The protein resides in the cell inner membrane. It carries out the reaction L-cysteinyl-[prolipoprotein] + a 1,2-diacyl-sn-glycero-3-phospho-(1'-sn-glycerol) = an S-1,2-diacyl-sn-glyceryl-L-cysteinyl-[prolipoprotein] + sn-glycerol 1-phosphate + H(+). Its pathway is protein modification; lipoprotein biosynthesis (diacylglyceryl transfer). Functionally, catalyzes the transfer of the diacylglyceryl group from phosphatidylglycerol to the sulfhydryl group of the N-terminal cysteine of a prolipoprotein, the first step in the formation of mature lipoproteins. The chain is Phosphatidylglycerol--prolipoprotein diacylglyceryl transferase from Nitratidesulfovibrio vulgaris (strain DSM 19637 / Miyazaki F) (Desulfovibrio vulgaris).